The chain runs to 558 residues: Membrane protein insertase YidC (558 aa).

5 consecutive transmembrane segments (helical) span residues Ser6–Glu26, Phe359–Ile379, Leu434–Leu454, Ile480–Ile500, and Leu513–Ile533.

This sequence belongs to the OXA1/ALB3/YidC family. Type 1 subfamily. Interacts with the Sec translocase complex via SecD. Specifically interacts with transmembrane segments of nascent integral membrane proteins during membrane integration.

It localises to the cell inner membrane. In terms of biological role, required for the insertion and/or proper folding and/or complex formation of integral membrane proteins into the membrane. Involved in integration of membrane proteins that insert both dependently and independently of the Sec translocase complex, as well as at least some lipoproteins. Aids folding of multispanning membrane proteins. The sequence is that of Membrane protein insertase YidC from Blochmanniella floridana.